Reading from the N-terminus, the 233-residue chain is Large ribosomal subunit protein uL1 (233 aa).

Belongs to the universal ribosomal protein uL1 family. In terms of assembly, part of the 50S ribosomal subunit.

Functionally, binds directly to 23S rRNA. The L1 stalk is quite mobile in the ribosome, and is involved in E site tRNA release. In terms of biological role, protein L1 is also a translational repressor protein, it controls the translation of the L11 operon by binding to its mRNA. This is Large ribosomal subunit protein uL1 from Finegoldia magna (strain ATCC 29328 / DSM 20472 / WAL 2508) (Peptostreptococcus magnus).